A 371-amino-acid polypeptide reads, in one-letter code: Protease PrtS (371 aa).

His169 provides a ligand contact to Zn(2+). Glu170 is an active-site residue. Zn(2+)-binding residues include His173 and Glu193. His273 serves as the catalytic Proton donor. Residues 352-371 (KEEDKDKGKDEGKDKAETKV) are disordered.

This sequence belongs to the peptidase M4 family. Zn(2+) serves as cofactor.

It localises to the secreted. Its activity is regulated as follows. Inhibited by 8 mM 1,10-phenanthroline, but not by EDTA or PMSF. Functionally, metalloprotease involved in the inhibition of insect antibacterial peptides. Reduces the antibacterial activity of G.mellonella hemolymph by 50%. Reduces the antibacterial activity of cecropin A by 80% and completely inhibits cecropin B. In Photorhabdus sp. (strain Az29), this protein is Protease PrtS.